The primary structure comprises 404 residues: Aspartokinase 1 (404 aa).

7–10 (KFGG) provides a ligand contact to ATP. 25–30 (HIKEAI) serves as a coordination point for substrate. Ser41 is an ATP binding site. Substrate contacts are provided by residues 52–54 (TDS), Glu79, 130–131 (LA), 155–158 (RGGS), and Ser158. ATP contacts are provided by residues 178–179 (TD) and 184–189 (MTADPR). Residues 299–301 (SVD), 355–356 (VT), 369–370 (PI), and 376–377 (SH) contribute to the substrate site. Residues 344-404 (AVGAGIMGVP…ALHEVFELSK (61 aa)) form the ACT domain.

Belongs to the aspartokinase family. As to quaternary structure, tetramer consisting of 2 isoforms Alpha (catalytic) and 2 isoforms Beta (function not known).

It catalyses the reaction L-aspartate + ATP = 4-phospho-L-aspartate + ADP. The protein operates within amino-acid biosynthesis; L-lysine biosynthesis via DAP pathway; (S)-tetrahydrodipicolinate from L-aspartate: step 1/4. Its pathway is amino-acid biosynthesis; L-methionine biosynthesis via de novo pathway; L-homoserine from L-aspartate: step 1/3. It functions in the pathway amino-acid biosynthesis; L-threonine biosynthesis; L-threonine from L-aspartate: step 1/5. Diaminopimelate-sensitive. Its function is as follows. Catalyzes the phosphorylation of the beta-carboxyl group of aspartic acid with ATP to yield 4-phospho-L-aspartate, which is involved in the branched biosynthetic pathway leading to the biosynthesis of amino acids threonine, isoleucine and methionine. The chain is Aspartokinase 1 (dapG) from Bacillus subtilis (strain 168).